The chain runs to 341 residues: Dehydration-responsive element-binding protein 2C (341 aa).

The Nuclear localization signal motif lies at 8–48 (RKRKSRGTRDVAEILRQWREYNEQIEAESCIDGGGPKSIRK). A disordered region spans residues 36–63 (SCIDGGGPKSIRKPPPKGSRKGCMKGKG). The span at 45–59 (SIRKPPPKGSRKGCM) shows a compositional bias: basic residues. A DNA-binding region (AP2/ERF) is located at residues 71–128 (DYRGVRQRRWGKWVAEIREPDGGARLWLGTFSSSYEAALAYDEAAKAIYGQSARLNLP).

This sequence belongs to the AP2/ERF transcription factor family. ERF subfamily.

It is found in the nucleus. Functionally, transcriptional activator that binds specifically to the DNA sequence 5'-[AG]CCGAC-3'. Binding to the C-repeat/DRE element mediates high salinity- and abscisic acid-inducible transcription. This chain is Dehydration-responsive element-binding protein 2C (DREB2C), found in Arabidopsis thaliana (Mouse-ear cress).